A 249-amino-acid polypeptide reads, in one-letter code: Molybdate/tungstate transport system permease protein WtpB (249 aa).

The Cytoplasmic portion of the chain corresponds to 1-10; that stretch reads MDRRDYLAYA. The chain crosses the membrane as a helical span at residues 11 to 31; the sequence is FAGLGAFLVAFIGLPLFMIFI. Topologically, residues 32–56 are extracellular; the sequence is KQAYDLEALQRTLVDPLVIESIRNS. One can recognise an ABC transmembrane type-1 domain in the interval 53-239; sequence IRNSLFTATV…TISLAVFIFL (187 aa). A helical transmembrane segment spans residues 57 to 77; it reads LFTATVSTLLGILFGVPLGYV. At 78 to 96 the chain is on the cytoplasmic side; that stretch reads LARKEFKGKNFVQALIDTP. Residues 97-117 form a helical membrane-spanning segment; it reads IVIPHSVVGIMLLVTFSDAIL. D118 is a topological domain (extracellular). Residues 119–139 form a helical membrane-spanning segment; that stretch reads NYKGIVAVMLFVSSPFIVNSA. Over 140-179 the chain is Cytoplasmic; it reads RDGFLSVDEKLEYVARTLGASGLRTFFSVTLPNAIHSIAS. The helical transmembrane segment at 180-200 threads the bilayer; the sequence is GAIMAWARAISEVGAILIVAY. Topologically, residues 201–223 are extracellular; that stretch reads YPKTAQVLIMEYFNNYGLRASRP. Residues 224 to 244 form a helical membrane-spanning segment; the sequence is IAVILVTISLAVFIFLRWLVG. The Cytoplasmic segment spans residues 245–249; the sequence is RGRNA.

This sequence belongs to the binding-protein-dependent transport system permease family. As to quaternary structure, the complex is composed of two ATP-binding proteins (WtpC), two transmembrane proteins (WtpB) and a solute-binding protein (WtpA).

Its subcellular location is the cell membrane. Functionally, part of the ABC transporter complex WtpABC involved in molybdate/tungstate import. Probably responsible for the translocation of the substrate across the membrane. This is Molybdate/tungstate transport system permease protein WtpB from Pyrococcus furiosus (strain ATCC 43587 / DSM 3638 / JCM 8422 / Vc1).